A 757-amino-acid polypeptide reads, in one-letter code: 5-methyltetrahydropteroyltriglutamate--homocysteine methyltransferase (757 aa).

5-methyltetrahydropteroyltri-L-glutamate-binding positions include 16-19 (RELK) and K112. Residues 432–434 (IGS) and E485 contribute to the L-homocysteine site. L-methionine is bound by residues 432–434 (IGS) and E485. 5-methyltetrahydropteroyltri-L-glutamate contacts are provided by residues 516–517 (RC) and W562. D600 serves as a coordination point for L-homocysteine. Residue D600 participates in L-methionine binding. E606 is a binding site for 5-methyltetrahydropteroyltri-L-glutamate. Residues H642, C644, and E666 each coordinate Zn(2+). H695 acts as the Proton donor in catalysis. C727 provides a ligand contact to Zn(2+).

The protein belongs to the vitamin-B12 independent methionine synthase family. The cofactor is Zn(2+).

The catalysed reaction is 5-methyltetrahydropteroyltri-L-glutamate + L-homocysteine = tetrahydropteroyltri-L-glutamate + L-methionine. The protein operates within amino-acid biosynthesis; L-methionine biosynthesis via de novo pathway; L-methionine from L-homocysteine (MetE route): step 1/1. Catalyzes the transfer of a methyl group from 5-methyltetrahydrofolate to homocysteine resulting in methionine formation. In Actinobacillus pleuropneumoniae serotype 7 (strain AP76), this protein is 5-methyltetrahydropteroyltriglutamate--homocysteine methyltransferase.